We begin with the raw amino-acid sequence, 79 residues long: Protein Vpu (79 aa).

Residues 1–7 (MLLLIKL) are Extracellular-facing. A helical membrane pass occupies residues 8–28 (GFIGLAIETLIVIVVWAIVYR). The Cytoplasmic portion of the chain corresponds to 29 to 79 (IYREVKVEEKISQLRQRIRDRAEDSGNESDGDAEELANLLPPDRIDQDNWV). A disordered region spans residues 48–79 (DRAEDSGNESDGDAEELANLLPPDRIDQDNWV). Phosphoserine; by host CK2 is present on residues S53 and S57. The segment covering 53 to 63 (SGNESDGDAEE) has biased composition (acidic residues).

The protein belongs to the HIV-1 VPU protein family. Homopentamer. Interacts with host CD4 and BRTC; these interactions induce proteasomal degradation of CD4. Interacts with host BST2; this interaction leads to the degradation of host BST2. Interacts with host FBXW11. Interacts with host AP1M1; this interaction plays a role in the mistrafficking and subsequent degradation of host BST2. Interacts with host RANBP2; this interaction allows Vpu to down-regulate host BLM sumoylation. Phosphorylated by host CK2. This phosphorylation is necessary for interaction with human BTRC and degradation of CD4.

The protein localises to the host membrane. Ion channel activity is inhibited by hexamethylene amiloride in vitro. In terms of biological role, enhances virion budding by targeting host CD4 and Tetherin/BST2 to proteasome degradation. Degradation of CD4 prevents any unwanted premature interactions between viral Env and its host receptor CD4 in the endoplasmic reticulum. Degradation of antiretroviral protein Tetherin/BST2 is important for virion budding, as BST2 tethers new viral particles to the host cell membrane. Mechanistically, Vpu bridges either CD4 or BST2 to BTRC, a substrate recognition subunit of the Skp1/Cullin/F-box protein E3 ubiquitin ligase, induces their ubiquitination and subsequent proteasomal degradation. The alteration of the E3 ligase specificity by Vpu seems to promote the degradation of host IKBKB, leading to NF-kappa-B down-regulation and subsequent apoptosis. Acts as a viroporin that forms an oligomeric ion channel in membranes. Modulates the host DNA repair mechanisms to promote degradation of nuclear viral cDNA in cells that are already productively infected in order to suppress immune sensing and proviral hyper-integration (superinfection). Manipulates PML-NBs and modulates SUMOylation of host BLM protein thereby enhancing its DNA-end processing activity toward viral unintegrated linear DNA. Also inhibits RAD52-mediated homologous repair of viral cDNA, preventing the generation of dead-end circular forms of single copies of the long terminal repeat and permitting sustained nucleolytic attack. The protein is Protein Vpu of Pan troglodytes (Chimpanzee).